The primary structure comprises 588 residues: A-type ATP synthase subunit A (588 aa).

An ATP-binding site is contributed by 237-244 (GPFGSGKT).

It belongs to the ATPase alpha/beta chains family. Has multiple subunits with at least A(3), B(3), C, D, E, F, H, I and proteolipid K(x).

The protein resides in the cell membrane. The enzyme catalyses ATP + H2O + 4 H(+)(in) = ADP + phosphate + 5 H(+)(out). Functionally, component of the A-type ATP synthase that produces ATP from ADP in the presence of a proton gradient across the membrane. The A chain is the catalytic subunit. The sequence is that of A-type ATP synthase subunit A from Methanoregula boonei (strain DSM 21154 / JCM 14090 / 6A8).